A 283-amino-acid chain; its full sequence is Thymidylate synthase (283 aa).

DUMP is bound at residue Arg22. Residue Cys160 is the Nucleophile of the active site. DUMP is bound by residues 180–183, Asn191, and 221–223; these read RSCD and HIY. Residue Asp183 coordinates (6R)-5,10-methylene-5,6,7,8-tetrahydrofolate. Ser282 serves as a coordination point for (6R)-5,10-methylene-5,6,7,8-tetrahydrofolate.

Belongs to the thymidylate synthase family. Bacterial-type ThyA subfamily. Homodimer.

The protein localises to the cytoplasm. The enzyme catalyses dUMP + (6R)-5,10-methylene-5,6,7,8-tetrahydrofolate = 7,8-dihydrofolate + dTMP. It functions in the pathway pyrimidine metabolism; dTTP biosynthesis. Functionally, catalyzes the reductive methylation of 2'-deoxyuridine-5'-monophosphate (dUMP) to 2'-deoxythymidine-5'-monophosphate (dTMP) while utilizing 5,10-methylenetetrahydrofolate (mTHF) as the methyl donor and reductant in the reaction, yielding dihydrofolate (DHF) as a by-product. This enzymatic reaction provides an intracellular de novo source of dTMP, an essential precursor for DNA biosynthesis. The sequence is that of Thymidylate synthase from Vibrio cholerae serotype O1 (strain ATCC 39315 / El Tor Inaba N16961).